A 317-amino-acid chain; its full sequence is Ribonuclease Z (317 aa).

His61, His63, Asp65, His66, His153, Asp221, and His280 together coordinate Zn(2+). Residue Asp65 is the Proton acceptor of the active site.

It belongs to the RNase Z family. In terms of assembly, homodimer. Zn(2+) serves as cofactor.

It catalyses the reaction Endonucleolytic cleavage of RNA, removing extra 3' nucleotides from tRNA precursor, generating 3' termini of tRNAs. A 3'-hydroxy group is left at the tRNA terminus and a 5'-phosphoryl group is left at the trailer molecule.. Its function is as follows. Zinc phosphodiesterase, which displays some tRNA 3'-processing endonuclease activity. Probably involved in tRNA maturation, by removing a 3'-trailer from precursor tRNA. The sequence is that of Ribonuclease Z from Alkaliphilus oremlandii (strain OhILAs) (Clostridium oremlandii (strain OhILAs)).